Consider the following 324-residue polypeptide: Phospho-N-acetylmuramoyl-pentapeptide-transferase (324 aa).

10 helical membrane passes run 5 to 25 (GLLV…PLFI), 52 to 72 (PTMG…IMAI), 77 to 97 (LGAE…IGFL), 122 to 142 (VIAI…YIMI), 149 to 169 (FELG…GSNA), 176 to 196 (LDGL…IIAV), 201 to 221 (FGVA…LVFN), 227 to 247 (VFMG…VAIL), 253 to 273 (LLVI…IQVI), and 302 to 322 (VVVT…YIGV).

It belongs to the glycosyltransferase 4 family. MraY subfamily. The cofactor is Mg(2+).

The protein localises to the cell membrane. It catalyses the reaction UDP-N-acetyl-alpha-D-muramoyl-L-alanyl-gamma-D-glutamyl-meso-2,6-diaminopimeloyl-D-alanyl-D-alanine + di-trans,octa-cis-undecaprenyl phosphate = di-trans,octa-cis-undecaprenyl diphospho-N-acetyl-alpha-D-muramoyl-L-alanyl-D-glutamyl-meso-2,6-diaminopimeloyl-D-alanyl-D-alanine + UMP. It participates in cell wall biogenesis; peptidoglycan biosynthesis. Functionally, catalyzes the initial step of the lipid cycle reactions in the biosynthesis of the cell wall peptidoglycan: transfers peptidoglycan precursor phospho-MurNAc-pentapeptide from UDP-MurNAc-pentapeptide onto the lipid carrier undecaprenyl phosphate, yielding undecaprenyl-pyrophosphoryl-MurNAc-pentapeptide, known as lipid I. This is Phospho-N-acetylmuramoyl-pentapeptide-transferase from Bacillus mycoides (strain KBAB4) (Bacillus weihenstephanensis).